A 1226-amino-acid polypeptide reads, in one-letter code: DNA-directed RNA polymerase subunit beta (1226 aa).

It belongs to the RNA polymerase beta chain family. In terms of assembly, the RNAP catalytic core consists of 2 alpha, 1 beta, 1 beta' and 1 omega subunit. When a sigma factor is associated with the core the holoenzyme is formed, which can initiate transcription.

It carries out the reaction RNA(n) + a ribonucleoside 5'-triphosphate = RNA(n+1) + diphosphate. DNA-dependent RNA polymerase catalyzes the transcription of DNA into RNA using the four ribonucleoside triphosphates as substrates. This is DNA-directed RNA polymerase subunit beta from Leptospira interrogans serogroup Icterohaemorrhagiae serovar copenhageni (strain Fiocruz L1-130).